The primary structure comprises 352 residues: Nicotinate-nucleotide--dimethylbenzimidazole phosphoribosyltransferase (352 aa).

The active-site Proton acceptor is E318.

The protein belongs to the CobT family.

It catalyses the reaction 5,6-dimethylbenzimidazole + nicotinate beta-D-ribonucleotide = alpha-ribazole 5'-phosphate + nicotinate + H(+). It functions in the pathway nucleoside biosynthesis; alpha-ribazole biosynthesis; alpha-ribazole from 5,6-dimethylbenzimidazole: step 1/2. Its function is as follows. Catalyzes the synthesis of alpha-ribazole-5'-phosphate from nicotinate mononucleotide (NAMN) and 5,6-dimethylbenzimidazole (DMB). The polypeptide is Nicotinate-nucleotide--dimethylbenzimidazole phosphoribosyltransferase (Geotalea uraniireducens (strain Rf4) (Geobacter uraniireducens)).